The chain runs to 1377 residues: Temperature-sensitive hemagglutinin tsh autotransporter (1377 aa).

The first 52 residues, 1–52 (MNRIYSLRYSAVARGFIAVSEFARKCVHKSVRRLCFPVLLLIPVLFSAGSLA), serve as a signal peptide directing secretion. Residues 53–302 (GTVNNELGYQ…AVIPLDFIGQ (250 aa)) enclose the Peptidase S6 domain. Residues His125, Asp153, and Ser259 each act as charge relay system in the active site. One can recognise an Autotransporter domain in the interval 1111 to 1377 (DINGEAGTWV…AINANIRYSF (267 aa)).

In terms of processing, the C-terminus is blocked. Cleaved to release the mature protein from the outer membrane.

The protein resides in the periplasm. It localises to the secreted. It is found in the cell surface. Its subcellular location is the cell outer membrane. Functionally, contributes to the development of lesions and deposition of fibrin in the avian air sacs. It can act both as an adhesin and as a serine protease. Agglutinates erythrocytes while in contact with the extracellular surface of the bacterial cells. Can adhere to purified hemoglobin and bind with great efficiency to extracellular matrix proteins. Cleaves casein and exhibits mucinolytic activity. The chain is Temperature-sensitive hemagglutinin tsh autotransporter (tsh) from Escherichia coli.